The primary structure comprises 137 residues: Leaf-specific thionin DB4 (137 aa).

A signal peptide spans 1-28 (MAPSKSIKSVVICVLILGLVLEQVQVEG). 4 disulfide bridges follow: Cys-31-Cys-68, Cys-32-Cys-60, Cys-40-Cys-58, and Cys-44-Cys-54. Residues 75-137 (LNLLPESGEP…DGAVIQSVEA (63 aa)) constitute a propeptide, acidic domain.

It belongs to the plant thionin (TC 1.C.44) family. 4 C-C subfamily.

The protein resides in the secreted. Its function is as follows. Thionins are small plant proteins which are toxic to animal cells. They seem to exert their toxic effect at the level of the cell membrane. Their precise function is not known. The chain is Leaf-specific thionin DB4 (THI1.3) from Hordeum vulgare (Barley).